We begin with the raw amino-acid sequence, 827 residues long: MKIEKTALTVAIALAMSSLSAHAEDAWVSTHTQAAMSPPASTQVLAASSTSATTTGNAYTLNMTGSPRIDGAAVTALEADHPLHVEVALKLRNPDALQTFLAGVTTPGSALFGKFLTPSQFTERFGPTQSQVDAVVAHLQQAGFTNIEVAPNRLLISADGTAGAATNGFRTSIKRFSANGREFFANDAPALVPASLGDSVNAVLGLQNVSVKHTLHHVYHPEDVTVPGPNVGTQAAAAVAAHHPQDFAAIYGGSSLPAATNTAVGIITWGSITQTVTDLNSFTSGAGLATVNSTITKVGSGTFANDPDSNGEWSLDSQDIVGIAGGVKQLIFYTSANGDSSSSGITDAGITASYNRAVTDNIAKLINVSLGEDETAAQQSGTQAADDAIFQQAVAQGQTFSIASGDAGVYQWSTDPTSGSPGYVANSAGTVKIDLTHYSVSEPASSPYVIQVGGTTLSTSGTTWSGETVWNEGLSAIAPSQGDNNQRLWATGGGVSLYEAAPSWQSSVSSSTKRVGPDLAFDAASSSGALIVVNGSTEQVGGTSLASPLFVGAFARIESAANNAIGFPASKFYQAFPTQTSLLHDVTSGNNGYQSHGYTAATGFDEATGFGSFDIGKLNTYAQANWVTGGGGGSTNAPPVANFSVATTGLVATFTDSSTDSDGSIASHAWTFGDGSTSTATSPSHTYSAAGTYSVAETVTDNAGATSTKTSSVTVSSSGGTGGGTVLQNGVAATGLSAAKNGQLKYTVAIPSGAKSLKIAISGGTGDADLYVKFGSAPTTSSYDCRPYVTGNTESCSFASPQTGTYYVLLNGYAAFSGVSLKATWTN.

The N-terminal stretch at 1-23 (MKIEKTALTVAIALAMSSLSAHA) is a signal peptide. The propeptide at 24 to 237 (EDAWVSTHTQ…GPNVGTQAAA (214 aa)) is removed in mature form. Residues 241–625 (AHHPQDFAAI…GKLNTYAQAN (385 aa)) form the Peptidase S53 domain. Catalysis depends on charge relay system residues E312, D316, and S544. 5 residues coordinate Ca(2+): D585, V586, A601, G603, and D605. The region spanning 635–722 (TNAPPVANFS…VTVSSSGGTG (88 aa)) is the PKD domain. Residues 636-827 (NAPPVANFSV…GVSLKATWTN (192 aa)) constitute a propeptide, removed in mature form.

Ca(2+) is required as a cofactor. In terms of processing, autocatalytically processed.

It localises to the secreted. It catalyses the reaction Cleavage of casein.. With respect to regulation, inhibited by 1,2-epoxy-3-(p-nitrophenoxy)propane (EPNP), but not by pepstatin, pepstatin Ac (S-PI) and diazoacetyl-DL-norleucine methyl ester (DAN). Not inhibited by metal ions. In terms of biological role, pepstatin-insensitive serine-carboxyl proteinase. Shows activity on acid-denatured hemoglobin and on casein. The chain is Xanthomonalisin from Xanthomonas sp. (strain T-22).